Reading from the N-terminus, the 428-residue chain is Something about silencing protein 10 (428 aa).

Residues 1–93 (MDSDGDDYVM…NTMDWGSKRS (93 aa)) are disordered. Acidic residues-rich tracts occupy residues 15-24 (QEYDDEEREI) and 46-62 (SDDD…EQQD). Phosphoserine occurs at positions 152, 323, 324, and 337. A disordered region spans residues 317 to 386 (GQQASVSSDD…LRNPRVKHRG (70 aa)). The segment covering 324 to 336 (SDDDDNDDDDDAE) has biased composition (acidic residues). Residues 344–353 (EEAGEEEEEE) are compositionally biased toward acidic residues. Residues 370–386 (TPHRKKELRNPRVKHRG) show a composition bias toward basic residues.

This sequence belongs to the SAS10 family.

It localises to the nucleus. In terms of biological role, essential for gene silencing: has a role in the structure of silenced chromatin. May be involved in gene regulation during development. Binds RNA. In Drosophila melanogaster (Fruit fly), this protein is Something about silencing protein 10.